Consider the following 339-residue polypeptide: Leucine-rich repeat-containing protein 59 (339 aa).

Topologically, residues 1 to 282 (MARGGGKSGS…KHSWSRSVLR (282 aa)) are cytoplasmic. 4 LRR repeats span residues 10-31 (SLKDKLDGNELDLSLCGLSEVP), 40-61 (KATVLDLSCNSLVSLPSDFCSL), 63-84 (HLVKLDLSKNRLQQLPVDFGRL), and 86-107 (SLQHLDLLNNRLVTLPVSFAQL). Residues 181 to 254 (MKVIQSEQDR…EMEKKTKKET (74 aa)) adopt a coiled-coil conformation. Residues 186-275 (SEQDRERQRK…PPQPARHKHS (90 aa)) are disordered. A compositionally biased stretch (basic and acidic residues) spans 187 to 256 (EQDRERQRKL…EKKTKKETVQ (70 aa)). Residues 283 to 300 (ALLLVLLCILCTLAVCKL) traverse the membrane as a helical segment. Residues 301–339 (TELQHQPLCVSVNTLYEDVVAAVQNHKTLQNMLQQNSQQ) lie on the Lumenal side of the membrane.

As to quaternary structure, interacts with SGO1.

It localises to the microsome membrane. It is found in the endoplasmic reticulum membrane. Its subcellular location is the nucleus envelope. In terms of biological role, required for nuclear import of FGF1. The protein is Leucine-rich repeat-containing protein 59 (LRRC59) of Gallus gallus (Chicken).